The following is a 247-amino-acid chain: 1-(5-phosphoribosyl)-5-[(5-phosphoribosylamino)methylideneamino] imidazole-4-carboxamide isomerase (247 aa).

Catalysis depends on D16, which acts as the Proton acceptor. D135 serves as the catalytic Proton donor.

This sequence belongs to the HisA/HisF family.

It localises to the cytoplasm. It catalyses the reaction 1-(5-phospho-beta-D-ribosyl)-5-[(5-phospho-beta-D-ribosylamino)methylideneamino]imidazole-4-carboxamide = 5-[(5-phospho-1-deoxy-D-ribulos-1-ylimino)methylamino]-1-(5-phospho-beta-D-ribosyl)imidazole-4-carboxamide. The protein operates within amino-acid biosynthesis; L-histidine biosynthesis; L-histidine from 5-phospho-alpha-D-ribose 1-diphosphate: step 4/9. The sequence is that of 1-(5-phosphoribosyl)-5-[(5-phosphoribosylamino)methylideneamino] imidazole-4-carboxamide isomerase from Paenarthrobacter aurescens (strain TC1).